Consider the following 353-residue polypeptide: D-alanine--D-alanine ligase (353 aa).

The ATP-grasp domain occupies 141-349 (KAAFAAAGLP…LEELVSQLVI (209 aa)). Residue 176-231 (EAKLKYPCFVKPANLGSSVGISKAQNRNELLIGLDKAASLDRRIVVEQGVSARELE) participates in ATP binding. Residues Asp-302, Glu-316, and Asn-318 each contribute to the Mg(2+) site.

This sequence belongs to the D-alanine--D-alanine ligase family. Mg(2+) serves as cofactor. It depends on Mn(2+) as a cofactor.

It localises to the cytoplasm. The catalysed reaction is 2 D-alanine + ATP = D-alanyl-D-alanine + ADP + phosphate + H(+). The protein operates within cell wall biogenesis; peptidoglycan biosynthesis. In terms of biological role, cell wall formation. The polypeptide is D-alanine--D-alanine ligase (Prochlorococcus marinus (strain MIT 9313)).